We begin with the raw amino-acid sequence, 220 residues long: Deoxyribose-phosphate aldolase (220 aa).

Residue Asp89 is the Proton donor/acceptor of the active site. Residue Lys151 is the Schiff-base intermediate with acetaldehyde of the active site. Catalysis depends on Lys180, which acts as the Proton donor/acceptor.

Belongs to the DeoC/FbaB aldolase family. DeoC type 1 subfamily.

The protein localises to the cytoplasm. It catalyses the reaction 2-deoxy-D-ribose 5-phosphate = D-glyceraldehyde 3-phosphate + acetaldehyde. It functions in the pathway carbohydrate degradation; 2-deoxy-D-ribose 1-phosphate degradation; D-glyceraldehyde 3-phosphate and acetaldehyde from 2-deoxy-alpha-D-ribose 1-phosphate: step 2/2. In terms of biological role, catalyzes a reversible aldol reaction between acetaldehyde and D-glyceraldehyde 3-phosphate to generate 2-deoxy-D-ribose 5-phosphate. This Staphylococcus saprophyticus subsp. saprophyticus (strain ATCC 15305 / DSM 20229 / NCIMB 8711 / NCTC 7292 / S-41) protein is Deoxyribose-phosphate aldolase.